The following is a 274-amino-acid chain: Thiamine kinase (274 aa).

This sequence belongs to the thiamine kinase family.

The enzyme catalyses thiamine + ATP = thiamine phosphate + ADP + H(+). The protein operates within cofactor biosynthesis; thiamine diphosphate biosynthesis; thiamine phosphate from thiamine: step 1/1. Its function is as follows. Catalyzes the ATP-dependent phosphorylation of thiamine to thiamine phosphate. Is involved in thiamine salvage. The sequence is that of Thiamine kinase from Salmonella choleraesuis (strain SC-B67).